A 288-amino-acid polypeptide reads, in one-letter code: 4-diphosphocytidyl-2-C-methyl-D-erythritol kinase (288 aa).

The active site involves lysine 10. Residue 94-104 (PVAAGLGGGSS) participates in ATP binding. The active site involves aspartate 136.

The protein belongs to the GHMP kinase family. IspE subfamily.

The catalysed reaction is 4-CDP-2-C-methyl-D-erythritol + ATP = 4-CDP-2-C-methyl-D-erythritol 2-phosphate + ADP + H(+). It functions in the pathway isoprenoid biosynthesis; isopentenyl diphosphate biosynthesis via DXP pathway; isopentenyl diphosphate from 1-deoxy-D-xylulose 5-phosphate: step 3/6. In terms of biological role, catalyzes the phosphorylation of the position 2 hydroxy group of 4-diphosphocytidyl-2C-methyl-D-erythritol. The protein is 4-diphosphocytidyl-2-C-methyl-D-erythritol kinase of Lactiplantibacillus plantarum (strain ATCC BAA-793 / NCIMB 8826 / WCFS1) (Lactobacillus plantarum).